A 392-amino-acid polypeptide reads, in one-letter code: Stilbene synthase 4 (392 aa).

55-58 (KFNR) is a binding site for substrate. The active site involves Cys164. Substrate contacts are provided by residues Leu267 and 305 to 307 (GGP).

It belongs to the thiolase-like superfamily. Chalcone/stilbene synthases family. As to quaternary structure, homodimer.

The protein resides in the cytoplasm. The catalysed reaction is 4-coumaroyl-CoA + 3 malonyl-CoA + 3 H(+) = trans-resveratrol + 4 CO2 + 4 CoA. Its pathway is phytoalexin biosynthesis; 3,4',5-trihydroxystilbene biosynthesis; 3,4',5-trihydroxystilbene from trans-4-coumarate: step 2/2. In terms of biological role, mediates resistance to pathogens which are sensitive to stilbenes. The polypeptide is Stilbene synthase 4 (Vitis vinifera (Grape)).